Reading from the N-terminus, the 486-residue chain is UDP-GalNAc:beta-1,3-N-acetylgalactosaminyltransferase 2 (486 aa).

At Met-1–Cys-10 the chain is on the cytoplasmic side. A helical; Signal-anchor for type II membrane protein transmembrane segment spans residues Val-11 to Leu-31. Topologically, residues Val-32–Arg-486 are lumenal. 2 N-linked (GlcNAc...) asparagine glycosylation sites follow: Asn-103 and Asn-160.

The protein belongs to the glycosyltransferase 31 family.

Its subcellular location is the golgi apparatus membrane. It localises to the endoplasmic reticulum. The catalysed reaction is 3-O-(N-acetyl-beta-D-glucosaminyl-(1-&gt;4)-alpha-D-mannosyl)-L-threonyl-[protein] + UDP-N-acetyl-alpha-D-galactosamine = 3-O-[beta-D-GalNAc-(1-&gt;3)-beta-D-GlcNAc-(1-&gt;4)-alpha-D-Man]-L-Thr-[protein] + UDP + H(+). Its pathway is protein modification; protein glycosylation. Its function is as follows. Beta-1,3-N-acetylgalactosaminyltransferase that synthesizes a unique carbohydrate structure, GalNAc-beta-1-3GlcNAc, on N- and O-glycans. Has no galactose nor galactosaminyl transferase activity toward any acceptor substrate. Involved in alpha-dystroglycan (dag1) glycosylation. The polypeptide is UDP-GalNAc:beta-1,3-N-acetylgalactosaminyltransferase 2 (b3galnt2) (Xenopus laevis (African clawed frog)).